A 414-amino-acid polypeptide reads, in one-letter code: 2,3-diketo-5-methylthiopentyl-1-phosphate enolase (414 aa).

K99 serves as the catalytic Proton acceptor. Residues K148, 174 to 177 (KDDE), H265, G338, and 360 to 361 (GG) contribute to the substrate site. Residues K174, D176, and E177 each coordinate Mg(2+). At K174 the chain carries N6-carboxylysine.

The protein belongs to the RuBisCO large chain family. Type IV subfamily. Homodimer. The cofactor is Mg(2+).

It carries out the reaction 5-methylsulfanyl-2,3-dioxopentyl phosphate = 2-hydroxy-5-methylsulfanyl-3-oxopent-1-enyl phosphate. It participates in amino-acid biosynthesis; L-methionine biosynthesis via salvage pathway; L-methionine from S-methyl-5-thio-alpha-D-ribose 1-phosphate: step 3/6. Functionally, catalyzes the enolization of 2,3-diketo-5-methylthiopentyl-1-phosphate (DK-MTP-1-P) into 2-hydroxy-3-keto-5-methylthiopentenyl-1-phosphate (HK-MTPenyl-1-P). The chain is 2,3-diketo-5-methylthiopentyl-1-phosphate enolase from Bacillus cereus (strain ZK / E33L).